The chain runs to 517 residues: Maturase K (517 aa).

The protein belongs to the intron maturase 2 family. MatK subfamily.

The protein localises to the plastid. It is found in the chloroplast. In terms of biological role, usually encoded in the trnK tRNA gene intron. Probably assists in splicing its own and other chloroplast group II introns. This is Maturase K from Trillium grandiflorum (Large-flowered trillium).